The following is a 189-amino-acid chain: MERQEESLSARPALETEGLRFLHTTVGSLLATYGWYIVFSCILLYVVFQKLSARLRALRQRQLDRAAAAVEPDVVVKRQEALAAARLKMQEELNAQVEKHKEKLKQLEEEKRRQKIEMWDSMQEGKSYKGNAKKPQEEDSPGPSTSSVLKRKSDRKPLRGGGYNPLSGEGGGACSWRPGRRGPSSGGUG.

A helical transmembrane segment spans residues 28 to 48; that stretch reads SLLATYGWYIVFSCILLYVVF. The tract at residues 78 to 90 is VCP/p97-interacting motif (VIM); it reads RQEALAAARLKMQ. Residues 115–189 are disordered; it reads KIEMWDSMQE…RRGPSSGGUG (75 aa). Ser140 carries the post-translational modification Phosphoserine. A compositionally biased stretch (gly residues) spans 159 to 173; the sequence is RGGGYNPLSGEGGGA. A non-standard amino acid (selenocysteine) is located at residue Sec188.

The protein belongs to the selenoprotein S family. In terms of assembly, interacts with DERL1 and (via VIM motif) with VCP, suggesting that it forms a membrane complex with DERL1 that serves as a receptor for VCP. Also interacts with DERL2, DERL3 and SELENOK. The SELENOK-SELENOS complex interacts with VCP. Interacts with CCDC47. In terms of processing, truncated SELENOS proteins produced by failed UGA/Sec decoding are ubiquitinated by the CRL2(KLHDC2) and CRL2(KLHDC3) complexes, which recognizes the glycine (Gly) at the C-terminus of truncated SELENOS proteins. Truncated SELENOS proteins produced by failed UGA/Sec decoding are also ubiquitinated by the CRL5(KLHDC1) complex.

It localises to the endoplasmic reticulum membrane. The protein resides in the cytoplasm. Functionally, involved in the degradation process of misfolded endoplasmic reticulum (ER) luminal proteins. Participates in the transfer of misfolded proteins from the ER to the cytosol, where they are destroyed by the proteasome in a ubiquitin-dependent manner. Probably acts by serving as a linker between DERL1, which mediates the retrotranslocation of misfolded proteins into the cytosol, and the ATPase complex VCP, which mediates the translocation and ubiquitination. The chain is Selenoprotein S from Homo sapiens (Human).